Reading from the N-terminus, the 428-residue chain is Glutamyl-tRNA reductase (428 aa).

Substrate is bound by residues 49 to 52, Ser-109, 114 to 116, and Gln-120; these read TCNR and EGQ. Catalysis depends on Cys-50, which acts as the Nucleophile. 189 to 194 is a binding site for NADP(+); the sequence is GAGKMS.

Belongs to the glutamyl-tRNA reductase family. As to quaternary structure, homodimer.

The catalysed reaction is (S)-4-amino-5-oxopentanoate + tRNA(Glu) + NADP(+) = L-glutamyl-tRNA(Glu) + NADPH + H(+). The protein operates within porphyrin-containing compound metabolism; protoporphyrin-IX biosynthesis; 5-aminolevulinate from L-glutamyl-tRNA(Glu): step 1/2. Its pathway is porphyrin-containing compound metabolism; chlorophyll biosynthesis. Its function is as follows. Catalyzes the NADPH-dependent reduction of glutamyl-tRNA(Glu) to glutamate 1-semialdehyde (GSA). This chain is Glutamyl-tRNA reductase, found in Gloeothece citriformis (strain PCC 7424) (Cyanothece sp. (strain PCC 7424)).